The chain runs to 401 residues: Phosphoglycerate kinase (401 aa).

Substrate-binding positions include D24 to N26, R40, H63 to R66, R122, and R155. Residues K206, G297, E328, and G357–S360 each bind ATP.

This sequence belongs to the phosphoglycerate kinase family. As to quaternary structure, monomer.

Its subcellular location is the cytoplasm. The catalysed reaction is (2R)-3-phosphoglycerate + ATP = (2R)-3-phospho-glyceroyl phosphate + ADP. It functions in the pathway carbohydrate degradation; glycolysis; pyruvate from D-glyceraldehyde 3-phosphate: step 2/5. This is Phosphoglycerate kinase from Gloeothece citriformis (strain PCC 7424) (Cyanothece sp. (strain PCC 7424)).